Here is a 320-residue protein sequence, read N- to C-terminus: Polyketide transferase FFUJ_12241 (320 aa).

Positions 58-298 (RDITCLAWDP…ILKGKGHLDW (241 aa)) are abhydrolase domain.

This sequence belongs to the polyketide transferase af380 family.

In terms of biological role, polyketide transferase; part of the gene cluster that mediates the biosynthesis of fujikurins A-D, secondary metabolites playing a role during rice infection. The polyketide synthase PKS19 acts with the trans-enoyl reductase FFUJ_12240 and the polyketide transferase FFUJ_12241 to produce fujikurins, however, the biosynthesis pathway has not been identified yet. This chain is Polyketide transferase FFUJ_12241, found in Gibberella fujikuroi (strain CBS 195.34 / IMI 58289 / NRRL A-6831) (Bakanae and foot rot disease fungus).